The chain runs to 696 residues: Polyphosphate kinase (696 aa).

Asn45 is an ATP binding site. Mg(2+) contacts are provided by Arg373 and Arg403. Residues Pro428–Thr462 form the PLD phosphodiesterase domain. The Phosphohistidine intermediate role is filled by His433. Tyr466, Arg562, and His590 together coordinate ATP.

It belongs to the polyphosphate kinase 1 (PPK1) family. Mg(2+) is required as a cofactor. In terms of processing, an intermediate of this reaction is the autophosphorylated ppk in which a phosphate is covalently linked to a histidine residue through a N-P bond.

The catalysed reaction is [phosphate](n) + ATP = [phosphate](n+1) + ADP. In terms of biological role, catalyzes the reversible transfer of the terminal phosphate of ATP to form a long-chain polyphosphate (polyP). The protein is Polyphosphate kinase of Vibrio parahaemolyticus serotype O3:K6 (strain RIMD 2210633).